The following is a 387-amino-acid chain: Eukaryotic translation initiation factor 3 subunit M (387 aa).

In terms of domain architecture, PCI spans 181-340 (LSSKVMIELL…HKVHITSTMH (160 aa)).

It belongs to the eIF-3 subunit M family. Component of the eukaryotic translation initiation factor 3 (eIF-3) complex. The eIF-3 complex interacts with pix.

The protein localises to the cytoplasm. The protein resides in the golgi apparatus. Functionally, component of the eukaryotic translation initiation factor 3 (eIF-3) complex, which is involved in protein synthesis of a specialized repertoire of mRNAs and, together with other initiation factors, stimulates binding of mRNA and methionyl-tRNAi to the 40S ribosome. The eIF-3 complex specifically targets and initiates translation of a subset of mRNAs involved in cell proliferation. In Drosophila erecta (Fruit fly), this protein is Eukaryotic translation initiation factor 3 subunit M.